A 1037-amino-acid chain; its full sequence is Importin-8 (1037 aa).

Residues 22 to 102 (AENELNQSYK…RDNIVEGIIR (81 aa)) form the Importin N-terminal domain. The span at 886 to 895 (DRSKAEKADM) shows a compositional bias: basic and acidic residues. The segment at 886–934 (DRSKAEKADMEENEEISSDEEETNVTAQAMQSNNGRGEDEEEEDDDWDE) is disordered. The span at 896–908 (EENEEISSDEEET) shows a compositional bias: acidic residues. Phosphoserine is present on residues S902 and S903. Residues 909–920 (NVTAQAMQSNNG) are compositionally biased toward polar residues. Acidic residues predominate over residues 923 to 934 (EDEEEEDDDWDE).

Belongs to the importin beta family. Forms a heterodimer with KPNB1. Interacts with SRP19. Interacts with RPL23A. Binds directly to nuclear pore complexes. Interacts with LRPPRC; the interaction occurs when LRPPRC is in its RNA-free form and promotes import of LRPPRC to the nucleus to allow for EIF4E-mediated export of mRNAS from the nucleus to the cytoplasm.

The protein resides in the cytoplasm. The protein localises to the nucleus. Involved in nuclear protein import, either by acting as autonomous nuclear transport receptor or as an adapter-like protein in association with the importin-beta subunit KPNB1. Acting autonomously, may serve as receptor for nuclear localization signals (NLS) and promote translocation of import substrates through the nuclear pore complex (NPC) by an energy requiring, Ran-dependent mechanism. At the nucleoplasmic side of the NPC, Ran binds to importin, the importin/substrate complex dissociates and importin is re-exported from the nucleus to the cytoplasm where GTP hydrolysis releases Ran. The directionality of nuclear import is thought to be conferred by an asymmetric distribution of the GTP- and GDP-bound forms of Ran between the cytoplasm and nucleus. In vitro mediates the nuclear import of the signal recognition particle protein SRP19. May also be involved in cytoplasm-to-nucleus shuttling of a broad spectrum of other cargos, including Argonaute-microRNAs complexes, the JUN protein, RELA/NF-kappa-B p65 subunit, the translation initiation factor EIF4E and a set of receptor-activated mothers against decapentaplegic homolog (SMAD) transcription factors that play a critical role downstream of the large family of transforming growth factor beta and bone morphogenetic protein (BMP) cytokines. This is Importin-8 (IPO8) from Homo sapiens (Human).